The primary structure comprises 47 residues: Protein YqhI (47 aa).

The protein is Protein YqhI of Escherichia coli (strain K12).